The sequence spans 209 residues: Thymidine kinase (209 aa).

Residues 9–16 and 88–91 each bind ATP; these read SAMNAGKT and DEAQ. E89 serves as the catalytic Proton acceptor.

Belongs to the thymidine kinase family. Homotetramer.

Its subcellular location is the cytoplasm. It carries out the reaction thymidine + ATP = dTMP + ADP + H(+). The protein is Thymidine kinase of Xanthomonas campestris pv. campestris (strain 8004).